Consider the following 305-residue polypeptide: Serine/threonine-protein phosphatase 6 catalytic subunit (305 aa).

4 residues coordinate Mn(2+): D54, H56, D82, and N114. Catalysis depends on H115, which acts as the Proton donor. Residues H164 and H238 each coordinate Mn(2+).

The protein belongs to the PPP phosphatase family. PP-6 (PP-V) subfamily. It depends on Mn(2+) as a cofactor.

The enzyme catalyses O-phospho-L-seryl-[protein] + H2O = L-seryl-[protein] + phosphate. It catalyses the reaction O-phospho-L-threonyl-[protein] + H2O = L-threonyl-[protein] + phosphate. This is Serine/threonine-protein phosphatase 6 catalytic subunit (ppp6c) from Dictyostelium discoideum (Social amoeba).